The sequence spans 227 residues: UPF0173 metal-dependent hydrolase SSO0099 (227 aa).

Belongs to the UPF0173 family.

In Saccharolobus solfataricus (strain ATCC 35092 / DSM 1617 / JCM 11322 / P2) (Sulfolobus solfataricus), this protein is UPF0173 metal-dependent hydrolase SSO0099.